A 201-amino-acid chain; its full sequence is Regulator of G-protein signaling rgs-1 (201 aa).

The RGS domain occupies 37 to 156; sequence SWQQSFDTLM…FLTSIFYRET (120 aa). The disordered stretch occupies residues 168-201; sequence GGDEEKEREQRAERARLNVPATAAEGSSKDISMV. The segment covering 170–183 has biased composition (basic and acidic residues); it reads DEEKEREQRAERAR.

In terms of tissue distribution, expressed in most or all neurons.

In terms of biological role, inhibits G protein signaling in nervous system, interacting preferentially with the G(O) subfamily member goa-1. In vitro, protein acts as a GTPase activator of goa-1. Rgs-1 and rgs-2 redundantly adjust signaling when worms are fed to allow rapid induction of egg-laying behavior. The chain is Regulator of G-protein signaling rgs-1 (rgs-1) from Caenorhabditis elegans.